We begin with the raw amino-acid sequence, 458 residues long: ATP synthase subunit beta (458 aa).

An ATP-binding site is contributed by 148-155 (GGAGVGKT).

The protein belongs to the ATPase alpha/beta chains family. F-type ATPases have 2 components, CF(1) - the catalytic core - and CF(0) - the membrane proton channel. CF(1) has five subunits: alpha(3), beta(3), gamma(1), delta(1), epsilon(1). CF(0) has three main subunits: a(1), b(2) and c(9-12). The alpha and beta chains form an alternating ring which encloses part of the gamma chain. CF(1) is attached to CF(0) by a central stalk formed by the gamma and epsilon chains, while a peripheral stalk is formed by the delta and b chains.

The protein localises to the cell inner membrane. The enzyme catalyses ATP + H2O + 4 H(+)(in) = ADP + phosphate + 5 H(+)(out). Functionally, produces ATP from ADP in the presence of a proton gradient across the membrane. The catalytic sites are hosted primarily by the beta subunits. The sequence is that of ATP synthase subunit beta from Legionella pneumophila (strain Paris).